The sequence spans 526 residues: Transcription factor kayak (526 aa).

Disordered regions lie at residues 71-165 (PPLA…GTGG) and 178-221 (RNTN…NKQA). Composition is skewed to low complexity over residues 78 to 87 (NNNNNNNNNG) and 133 to 153 (ISDT…HMMG). Over residues 154-165 (NSGGGNGGGTGG) the composition is skewed to gly residues. Over residues 178–187 (RNTNTSNSAT) the composition is skewed to polar residues. The region spanning 208–271 (EEKRRIRRER…NQLEYFLQAH (64 aa)) is the bZIP domain. Positions 210–229 (KRRIRRERNKQAAARCRKRR) are basic motif. The tract at residues 236–264 (LTEEVELLEKRGENLKKEMELLNETKNQL) is leucine-zipper. Positions 301 to 322 (GSCGSGSSHHNNNSNSNDSSSG) are enriched in low complexity. Disordered stretches follow at residues 301 to 345 (GSCG…DLKP) and 504 to 526 (TSQN…LVSL). The span at 330–340 (TLNSTGRSNSP) shows a compositional bias: polar residues. Ser339 is modified (phosphoserine).

It belongs to the bZIP family. Fos subfamily. In terms of assembly, homodimer. Heterodimer with Jra. The kay-Jra heterodimer binds more stably to the AP-1 site than either of the two proteins alone.

Its subcellular location is the nucleus. Developmentally regulated transcription factor AP-1 binds and recognizes the enhancer DNA sequence: 5'-TGA[CG]TCA-3'. May play a role in the function or determination of a particular subset of cells in the developing embryo. It is able to carry out its function either independently of or in conjunction with Jra. The sequence is that of Transcription factor kayak from Drosophila persimilis (Fruit fly).